We begin with the raw amino-acid sequence, 533 residues long: Probable DNA ligase (533 aa).

E211 serves as a coordination point for ATP. K213 (N6-AMP-lysine intermediate) is an active-site residue. Residues R218, R233, E262, F302, R374, and K380 each contribute to the ATP site. The segment at 512–533 is disordered; the sequence is LAGEAAEKGQAEGGGEELEDDG.

It belongs to the ATP-dependent DNA ligase family. Mg(2+) serves as cofactor.

The catalysed reaction is ATP + (deoxyribonucleotide)n-3'-hydroxyl + 5'-phospho-(deoxyribonucleotide)m = (deoxyribonucleotide)n+m + AMP + diphosphate.. In terms of biological role, DNA ligase that seals nicks in double-stranded DNA during DNA replication, DNA recombination and DNA repair. This is Probable DNA ligase from Sorangium cellulosum (strain So ce56) (Polyangium cellulosum (strain So ce56)).